Consider the following 678-residue polypeptide: WD repeat-containing protein 48 (678 aa).

WD repeat units lie at residues 28–67, 73–112, 115–154, 166–205, 208–247, 250–289, 292–334, and 358–452; these read YNRN…QDPY, HHTD…CMST, THKD…ALTA, GNKD…KLMK, GHTD…CIAT, VHDE…IRVL, EEKA…NFRA, and KGGA…GFSS. The disordered stretch occupies residues 608-629; that stretch reads LDNESQTTSSSNNEKAGEQEKE. Over residues 610–621 the composition is skewed to low complexity; the sequence is NESQTTSSSNNE.

It belongs to the WD repeat WDR48 family.

It is found in the nucleus. The protein localises to the cytoplasm. The protein resides in the lysosome. Its subcellular location is the late endosome. Functionally, regulator of deubiquitinating complexes, which acts as a strong activator of USP1, USP12 and USP46. Enhances the USP1-mediated deubiquitination of FANCD2; USP1 being almost inactive by itself. Activates deubiquitination by increasing the catalytic turnover without increasing the affinity of deubiquitinating enzymes for the substrate. Also activates deubiquitinating activity of complexes containing USP12. Docks at the distal end of the USP12 fingers domain and induces a cascade of structural changes leading to the activation of the enzyme. Together with RAD51AP1, promotes DNA repair by stimulating RAD51-mediated homologous recombination. Binds single-stranded DNA (ssDNA) and double-stranded DNA (dsDNA). DNA-binding is required both for USP1-mediated deubiquitination of FANCD2 and stimulation of RAD51-mediated homologous recombination: both WDR48/UAF1 and RAD51AP1 have coordinated role in DNA-binding during these processes. Together with ATAD5 and by regulating USP1 activity, has a role in PCNA-mediated translesion synthesis (TLS) by deubiquitinating monoubiquitinated PCNA. Together with ATAD5, has a role in recruiting RAD51 to stalled forks during replication stress. This is WD repeat-containing protein 48 (WDR48) from Gallus gallus (Chicken).